Reading from the N-terminus, the 237-residue chain is MARRPTPPGTPQPTGIGHIVDLVRHAIPPLHPAGLPFVLAPLGVAALGRNRKWVRRAGLTTAAACATFFRHPHRVPPNRIGVVVAPADGEVALVDNAVPPAELNLGSEPRPRVSIFLSVLDVHVQRSPVGGTVKEVVHQAGKFLSADLADASEVNERNSMLIETADGHDVAVVQIAGLLARRIVCYAGVGDVLPIGDTYGLIRFGSRVDTYFPAGTTLLVEPGQRTIGAETVIAQLP.

Catalysis depends on serine 206, which acts as the Schiff-base intermediate with substrate; via pyruvic acid. Serine 206 is subject to Pyruvic acid (Ser); by autocatalysis.

This sequence belongs to the phosphatidylserine decarboxylase family. PSD-A subfamily. Heterodimer of a large membrane-associated beta subunit and a small pyruvoyl-containing alpha subunit. Pyruvate is required as a cofactor. Is synthesized initially as an inactive proenzyme. Formation of the active enzyme involves a self-maturation process in which the active site pyruvoyl group is generated from an internal serine residue via an autocatalytic post-translational modification. Two non-identical subunits are generated from the proenzyme in this reaction, and the pyruvate is formed at the N-terminus of the alpha chain, which is derived from the carboxyl end of the proenzyme. The post-translation cleavage follows an unusual pathway, termed non-hydrolytic serinolysis, in which the side chain hydroxyl group of the serine supplies its oxygen atom to form the C-terminus of the beta chain, while the remainder of the serine residue undergoes an oxidative deamination to produce ammonia and the pyruvoyl prosthetic group on the alpha chain.

It is found in the cell membrane. It carries out the reaction a 1,2-diacyl-sn-glycero-3-phospho-L-serine + H(+) = a 1,2-diacyl-sn-glycero-3-phosphoethanolamine + CO2. It functions in the pathway phospholipid metabolism; phosphatidylethanolamine biosynthesis; phosphatidylethanolamine from CDP-diacylglycerol: step 2/2. In terms of biological role, catalyzes the formation of phosphatidylethanolamine (PtdEtn) from phosphatidylserine (PtdSer). This chain is Phosphatidylserine decarboxylase proenzyme, found in Rhodococcus erythropolis (strain PR4 / NBRC 100887).